The primary structure comprises 459 residues: Phosphoglucosamine mutase (459 aa).

Serine 102 (phosphoserine intermediate) is an active-site residue. Mg(2+) is bound by residues serine 102, aspartate 243, aspartate 245, and aspartate 247. Serine 102 bears the Phosphoserine mark.

Belongs to the phosphohexose mutase family. The cofactor is Mg(2+). Activated by phosphorylation.

It carries out the reaction alpha-D-glucosamine 1-phosphate = D-glucosamine 6-phosphate. Its function is as follows. Catalyzes the conversion of glucosamine-6-phosphate to glucosamine-1-phosphate. The polypeptide is Phosphoglucosamine mutase (Bartonella quintana (strain Toulouse) (Rochalimaea quintana)).